We begin with the raw amino-acid sequence, 315 residues long: Glutathione synthetase (315 aa).

The ATP-grasp domain occupies 125–310 (KLFTAWFSEF…ITGMLFDAIE (186 aa)). 151–207 (HQAKGDIILKPLDGMGGTSIFRVKQDDPNLGVIIETLTQYGNQYAMAQAFIPEITKG) serves as a coordination point for ATP. The Mg(2+) site is built by Glu-281 and Asn-283.

The protein belongs to the prokaryotic GSH synthase family. The cofactor is Mg(2+). It depends on Mn(2+) as a cofactor.

The enzyme catalyses gamma-L-glutamyl-L-cysteine + glycine + ATP = glutathione + ADP + phosphate + H(+). The protein operates within sulfur metabolism; glutathione biosynthesis; glutathione from L-cysteine and L-glutamate: step 2/2. This is Glutathione synthetase from Shewanella oneidensis (strain ATCC 700550 / JCM 31522 / CIP 106686 / LMG 19005 / NCIMB 14063 / MR-1).